The primary structure comprises 162 residues: Ribosome maturation factor RimP (162 aa).

Belongs to the RimP family.

The protein resides in the cytoplasm. Its function is as follows. Required for maturation of 30S ribosomal subunits. This is Ribosome maturation factor RimP from Beutenbergia cavernae (strain ATCC BAA-8 / DSM 12333 / CCUG 43141 / JCM 11478 / NBRC 16432 / NCIMB 13614 / HKI 0122).